The primary structure comprises 496 residues: NADH-ubiquinone oxidoreductase 51 kDa subunit, mitochondrial (496 aa).

The N-terminal 30 residues, 1–30 (MISRAAAPSSSIASLSSRSLRAQAPAARSF), are a transit peptide targeting the mitochondrion. 98 to 107 (GRGGAGFPSG) lines the NAD(+) pocket. An FMN-binding site is contributed by 214–261 (GMGAYVCGEETSLIESIEGKAGKPRLKPPFPAAVGLFGCPSTVTNVET). Cysteine 393, cysteine 396, cysteine 399, and cysteine 439 together coordinate [4Fe-4S] cluster.

Belongs to the complex I 51 kDa subunit family. As to quaternary structure, complex I is composed of about 40 different subunits. This is a component of the flavoprotein-sulfur (FP) fragment of the enzyme. The cofactor is FMN. [4Fe-4S] cluster serves as cofactor.

The protein resides in the mitochondrion inner membrane. The catalysed reaction is a ubiquinone + NADH + 5 H(+)(in) = a ubiquinol + NAD(+) + 4 H(+)(out). Its function is as follows. Core subunit of the mitochondrial membrane respiratory chain NADH dehydrogenase (Complex I) that is believed to belong to the minimal assembly required for catalysis. Complex I functions in the transfer of electrons from NADH to the respiratory chain. The immediate electron acceptor for the enzyme is believed to be ubiquinone. This chain is NADH-ubiquinone oxidoreductase 51 kDa subunit, mitochondrial (NUO51), found in Aspergillus niger.